The sequence spans 200 residues: NAD(P)H dehydrogenase (quinone) (200 aa).

The 188-residue stretch at I4–V191 folds into the Flavodoxin-like domain. FMN-binding positions include S10–V15 and T79–F81. W12 is a binding site for NAD(+). W99 contributes to the substrate binding site. FMN contacts are provided by residues S114–G120 and H135.

It belongs to the WrbA family. It depends on FMN as a cofactor.

The catalysed reaction is a quinone + NADH + H(+) = a quinol + NAD(+). It catalyses the reaction a quinone + NADPH + H(+) = a quinol + NADP(+). This is NAD(P)H dehydrogenase (quinone) from Acidithiobacillus ferrooxidans (strain ATCC 53993 / BNL-5-31) (Leptospirillum ferrooxidans (ATCC 53993)).